We begin with the raw amino-acid sequence, 92 residues long: Sec-independent protein translocase protein TatA (92 aa).

Residues 1 to 21 (MGIFDWKHWIVILVVVVLVFG) form a helical membrane-spanning segment. A disordered region spans residues 44 to 92 (NDDEKPADPVVNPVPPAQPVHPQATQPITERRTFDVQAEKVEEPTRKDS). Basic and acidic residues predominate over residues 72–92 (TERRTFDVQAEKVEEPTRKDS).

Belongs to the TatA/E family. As to quaternary structure, the Tat system comprises two distinct complexes: a TatABC complex, containing multiple copies of TatA, TatB and TatC subunits, and a separate TatA complex, containing only TatA subunits. Substrates initially bind to the TatABC complex, which probably triggers association of the separate TatA complex to form the active translocon.

It localises to the cell inner membrane. In terms of biological role, part of the twin-arginine translocation (Tat) system that transports large folded proteins containing a characteristic twin-arginine motif in their signal peptide across membranes. TatA could form the protein-conducting channel of the Tat system. The chain is Sec-independent protein translocase protein TatA from Pseudomonas fluorescens (strain SBW25).